Consider the following 603-residue polypeptide: Laccase 1 (603 aa).

The signal sequence occupies residues 1 to 20; that stretch reads MSRFARLLLIVALFFTNAWA. Plastocyanin-like domains follow at residues 66–108 and 159–349; these read QRPI…IHIR and LVVS…MRIP. Cu cation is bound by residues His90 and His92. N-linked (GlcNAc...) asparagine glycosylation is found at Asn246, Asn269, Asn434, and Asn474. Positions 460–588 constitute a Plastocyanin-like 3 domain; it reads TRDTENDGLV…GGMGIAILDG (129 aa). The Cu cation site is built by His496, His499, and His501. The N-linked (GlcNAc...) asparagine glycan is linked to Asn516. Cu cation-binding residues include His570, Cys571, His572, and His576.

Belongs to the multicopper oxidase family. Cu cation is required as a cofactor.

It localises to the cell surface. The protein operates within pigment biosynthesis. Its function is as follows. Laccase; part of the Pks1 gene cluster that mediates the biosynthesis of an anthraquinone derivative pigment that contributes to conidial pigmentation that provides protection from UV radiation, heat and cold stress. The polyketide synthase Pks1 produces 1-acetyl-2,4,6,8-tetrahydroxy-9,10-anthraquinone though condensation of acetyl-CoA with malonyl-CoA. The dehydratase EthD and the laccase Mlac1 further convert the anthraquinone derivative into the final conidial pigment. This Metarhizium anisopliae (Entomophthora anisopliae) protein is Laccase 1.